Reading from the N-terminus, the 620-residue chain is Chaperone protein HscA homolog (620 aa).

It belongs to the heat shock protein 70 family.

Its function is as follows. Chaperone involved in the maturation of iron-sulfur cluster-containing proteins. Has a low intrinsic ATPase activity which is markedly stimulated by HscB. The protein is Chaperone protein HscA homolog of Shewanella baltica (strain OS195).